An 89-amino-acid polypeptide reads, in one-letter code: Small ribosomal subunit protein uS15 (89 aa).

It belongs to the universal ribosomal protein uS15 family. As to quaternary structure, part of the 30S ribosomal subunit. Forms a bridge to the 50S subunit in the 70S ribosome, contacting the 23S rRNA.

Functionally, one of the primary rRNA binding proteins, it binds directly to 16S rRNA where it helps nucleate assembly of the platform of the 30S subunit by binding and bridging several RNA helices of the 16S rRNA. Forms an intersubunit bridge (bridge B4) with the 23S rRNA of the 50S subunit in the ribosome. In Pseudomonas entomophila (strain L48), this protein is Small ribosomal subunit protein uS15.